A 302-amino-acid chain; its full sequence is tRNA pseudouridine synthase B (302 aa).

The active-site Nucleophile is Asp42.

This sequence belongs to the pseudouridine synthase TruB family. Type 1 subfamily.

It catalyses the reaction uridine(55) in tRNA = pseudouridine(55) in tRNA. Responsible for synthesis of pseudouridine from uracil-55 in the psi GC loop of transfer RNAs. This is tRNA pseudouridine synthase B from Leifsonia xyli subsp. xyli (strain CTCB07).